A 477-amino-acid chain; its full sequence is Pyruvate kinase (477 aa).

Arg34 contacts substrate. Residues Asn36, Asp64, and Thr65 each coordinate K(+). 36 to 39 (NTAH) provides a ligand contact to ATP. Arg71 and Lys150 together coordinate ATP. Glu216 is a Mg(2+) binding site. Substrate-binding residues include Gly239, Asp240, and Thr272. Asp240 provides a ligand contact to Mg(2+).

This sequence belongs to the pyruvate kinase family. Homotetramer. It depends on Mg(2+) as a cofactor. K(+) serves as cofactor.

It carries out the reaction pyruvate + ATP = phosphoenolpyruvate + ADP + H(+). It participates in carbohydrate degradation; glycolysis; pyruvate from D-glyceraldehyde 3-phosphate: step 5/5. The protein is Pyruvate kinase (pyk) of Borreliella burgdorferi (strain ATCC 35210 / DSM 4680 / CIP 102532 / B31) (Borrelia burgdorferi).